Reading from the N-terminus, the 251-residue chain is MLKGHLHSVESMGTVDGPGLRYILFTQGCLLRCLYCHNPDTWKINEPSREVTVDEMVNEILPYKPYFEASGGGVTVSGGEPLLQMPFLEQLFKELKANGVHTCIDTSAGCVNDTPAFNRHFDELQKHTDLILLDIKHIDNDKHIKLTGKPNTHILKFARKLSDMKQPVWIRHVLVPGISDDKEDLIKLGEFINSLDNVEKFEILPYHQLGVHKWKNLGIPYQLENVEPPDDEAVKEAYRYVNFNGKIPVTL.

The 230-residue stretch at 15–244 folds into the Radical SAM core domain; it reads VDGPGLRYIL…KEAYRYVNFN (230 aa). Residues Cys-29, Cys-33, and Cys-36 each contribute to the [4Fe-4S] cluster site. S-adenosyl-L-methionine contacts are provided by residues 35–37, Gly-79, 134–136, and His-207; these read YCH and DIK.

It belongs to the organic radical-activating enzymes family. [4Fe-4S] cluster serves as cofactor.

The protein localises to the cytoplasm. It catalyses the reaction glycyl-[formate C-acetyltransferase] + reduced [flavodoxin] + S-adenosyl-L-methionine = glycin-2-yl radical-[formate C-acetyltransferase] + semiquinone [flavodoxin] + 5'-deoxyadenosine + L-methionine + H(+). In terms of biological role, activation of pyruvate formate-lyase under anaerobic conditions by generation of an organic free radical, using S-adenosylmethionine and reduced flavodoxin as cosubstrates to produce 5'-deoxy-adenosine. In Staphylococcus epidermidis (strain ATCC 12228 / FDA PCI 1200), this protein is Pyruvate formate-lyase-activating enzyme (pflA).